The sequence spans 32 residues: Lectin (32 aa).

It belongs to the leguminous lectin family. Homotetramer.

In terms of biological role, metalloglycoprotein, containing Ca, Mg, Mn, and Zn and the carbohydrates galactose, glucosamine, mannose, and fucose. It agglutinates erythrocytes of blood group A1. The polypeptide is Lectin (Macrotyloma axillare (Perennial horse gram)).